The primary structure comprises 580 residues: Membrane protein insertase YidC (580 aa).

6 consecutive transmembrane segments (helical) span residues 5–25, 259–279, 362–382, 427–447, 477–497, and 513–533; these read SVTG…FMSP, KYFV…LDGS, GLII…LSLA, LGGC…FYVF, IPMY…TVFV, and IMLY…PSGL.

It belongs to the OXA1/ALB3/YidC family. Type 1 subfamily. In terms of assembly, interacts with the Sec translocase complex via SecD. Specifically interacts with transmembrane segments of nascent integral membrane proteins during membrane integration.

It is found in the cell inner membrane. Functionally, required for the insertion and/or proper folding and/or complex formation of integral membrane proteins into the membrane. Involved in integration of membrane proteins that insert both dependently and independently of the Sec translocase complex, as well as at least some lipoproteins. Aids folding of multispanning membrane proteins. This is Membrane protein insertase YidC from Chlorobium phaeovibrioides (strain DSM 265 / 1930) (Prosthecochloris vibrioformis (strain DSM 265)).